A 442-amino-acid chain; its full sequence is Putative major teichoic acid biosynthesis protein C (442 aa).

Its function is as follows. Unknown. Might be involved in poly(glycerol phosphate) teichoic acid biosynthesis. The chain is Putative major teichoic acid biosynthesis protein C (tagC) from Bacillus subtilis (strain 168).